We begin with the raw amino-acid sequence, 474 residues long: Probable dipeptidase B (474 aa).

The active site involves Cys11.

It belongs to the peptidase C69 family.

It catalyses the reaction an L-aminoacyl-L-amino acid + H2O = 2 an L-alpha-amino acid. This is Probable dipeptidase B (pepDB) from Lactococcus lactis subsp. lactis (strain IL1403) (Streptococcus lactis).